A 60-amino-acid chain; its full sequence is Protein BNLF2a (60 aa).

Residues 14 to 26 show a composition bias toward polar residues; it reads SSACGLPGSSTET. Residues 14–34 form a disordered region; it reads SSACGLPGSSTETRPSHPCPE. The chain crosses the membrane as a helical span at residues 41–59; it reads LRLLLVVLCVLFGLLCLLL.

This sequence belongs to the lymphocryptovirus BNLF2a family. In terms of assembly, interacts with host TAP1 and TAP2.

It localises to the host endoplasmic reticulum membrane. Participates in viral evasion from HLA class I-restricted T-cell immunity. Associates with host TAP1 and TAP2 and prevents TAP-mediated peptide transport and subsequent loading. In Homo sapiens (Human), this protein is Protein BNLF2a.